The chain runs to 225 residues: Ribosomal RNA small subunit methyltransferase G (225 aa).

S-adenosyl-L-methionine is bound by residues Gly96, Phe101, 146–147 (AE), and Arg160.

Belongs to the methyltransferase superfamily. RNA methyltransferase RsmG family.

Its subcellular location is the cytoplasm. Functionally, specifically methylates the N7 position of a guanine in 16S rRNA. This Mycoplasma mobile (strain ATCC 43663 / 163K / NCTC 11711) (Mesomycoplasma mobile) protein is Ribosomal RNA small subunit methyltransferase G.